Here is a 1442-residue protein sequence, read N- to C-terminus: Cleavage and polyadenylation specificity factor subunit 1 (1442 aa).

The protein belongs to the CPSF1 family. Component of the CPSF complex, at least composed of CPSF160, CPSF100, CPSF73-I, CPSF73-II, CPSF30, FY and FIPS5. Forms a complex with cleavage and polyadenylation specificity factor (CPSF) subunits FY, CPSF30, CPSF73-I, CPSF 73-II and CPSF100.

It localises to the nucleus. Functionally, CPSF plays a key role in pre-mRNA 3'-end formation, recognizing the AAUAAA signal sequence and interacting with poly(A)polymerase and other factors to bring about cleavage and poly(A) addition. This subunit is involved in the RNA recognition step of the polyadenylation reaction. This chain is Cleavage and polyadenylation specificity factor subunit 1 (CPSF160), found in Arabidopsis thaliana (Mouse-ear cress).